We begin with the raw amino-acid sequence, 578 residues long: 15-cis-phytoene desaturase, chloroplastic/chromoplastic (578 aa).

The transit peptide at 1–87 (MDTGCLSSMN…PLENTINFLE (87 aa)) directs the protein to the chloroplast and chromoplast. Residues A115, 134–135 (EA), K142, 159–160 (HI), and Y165 contribute to the FAD site. R300 contacts substrate. 2 residues coordinate FAD: I342 and D531. Substrate is bound at residue A539. M541 is a binding site for FAD.

It belongs to the carotenoid/retinoid oxidoreductase family. As to quaternary structure, homotetramer. Homotetramer is the active form of the enzyme. It depends on FAD as a cofactor.

Its subcellular location is the plastid. It localises to the chloroplast. It is found in the chromoplast. The protein localises to the membrane. The enzyme catalyses 2 a plastoquinone + 15-cis-phytoene = 9,9',15-tri-cis-zeta-carotene + 2 a plastoquinol. It functions in the pathway carotenoid biosynthesis; lycopene biosynthesis. With respect to regulation, inhibited by the herbicide norflurazon (NFZ). Its function is as follows. Converts phytoene into zeta-carotene via the intermediary of phytofluene by the symmetrical introduction of two double bonds at the C-11 and C-11' positions of phytoene with a concomitant isomerization of two neighboring double bonds at the C9 and C9' positions from trans to cis. Active with decylplastoquinone (DPQ) as substrate. Also active with other benzoquinones, which are strongly preferred over naphthoquinones as substrates. This is 15-cis-phytoene desaturase, chloroplastic/chromoplastic (PDS1) from Oryza sativa subsp. indica (Rice).